The primary structure comprises 185 residues: Ribose 1,5-bisphosphate phosphokinase PhnN (185 aa).

13–20 lines the ATP pocket; it reads GPSGAGKD.

The protein belongs to the ribose 1,5-bisphosphokinase family.

It catalyses the reaction alpha-D-ribose 1,5-bisphosphate + ATP = 5-phospho-alpha-D-ribose 1-diphosphate + ADP. It participates in metabolic intermediate biosynthesis; 5-phospho-alpha-D-ribose 1-diphosphate biosynthesis; 5-phospho-alpha-D-ribose 1-diphosphate from D-ribose 5-phosphate (route II): step 3/3. Its function is as follows. Catalyzes the phosphorylation of ribose 1,5-bisphosphate to 5-phospho-D-ribosyl alpha-1-diphosphate (PRPP). This Chromobacterium violaceum (strain ATCC 12472 / DSM 30191 / JCM 1249 / CCUG 213 / NBRC 12614 / NCIMB 9131 / NCTC 9757 / MK) protein is Ribose 1,5-bisphosphate phosphokinase PhnN.